Here is a 320-residue protein sequence, read N- to C-terminus: Sliding-clamp-loader large subunit (320 aa).

Residues 12–15 (EQKY), Ile24, 53–58 (GTGKTT), and Arg205 contribute to the ATP site.

It belongs to the Tevenvirinae sliding-clamp-loader large subunit family. In terms of assembly, the sliding-clamp-loader consists of 4 large subunits and 1 small subunit. Interacts with the sliding clamp; this interaction allows the sliding-clamp-loader to open the sliding clamp. Part of the replicase complex that includes the DNA polymerase, the polymerase clamp, the clamp loader complex, the single-stranded DNA binding protein, the primase, the helicase and the helicase assembly factor.

Forms the sliding-clamp-loader together with the small subunit. Functions as an ATPase enzyme. The clamp loader holds the clamp in an open conformation and places it onto the DNA. 4 ATP molecules must bind to the sliding-clamp-loader before the latter can open the sliding clamp. ATP hydrolysis triggers the detachment of the sliding clamp from the sliding-clamp-loader, freeing the sliding clamp to track along DNA. The chain is Sliding-clamp-loader large subunit (44) from Escherichia phage RB69 (Bacteriophage RB69).